We begin with the raw amino-acid sequence, 307 residues long: UAP56-interacting factor (307 aa).

A compositionally biased stretch (low complexity) spans 1-25; the sequence is MSGFGAAALLSGSSAAAGTRSGSSD. Disordered stretches follow at residues 1 to 28 and 41 to 85; these read MSGF…DSLE and NKKE…KNHL. The UAP56-binding motif signature appears at 26–44; it reads SLEKIDMSLDDIIKLNKKE. The segment covering 57–78 has biased composition (polar residues); the sequence is LQQNRTQQFRTPGSKWGIQQQK.

Belongs to the UIF family. As to expression, widely expressed.

The protein localises to the nucleus. It localises to the nucleoplasm. Its subcellular location is the nucleus speckle. Required for mRNA export from the nucleus to the cytoplasm. Acts as an adapter that uses the DDX39B/UAP56-NFX1 pathway to ensure efficient mRNA export and delivering to the nuclear pore. This is UAP56-interacting factor (FYTTD1) from Gallus gallus (Chicken).